Here is a 185-residue protein sequence, read N- to C-terminus: Ribosome-recycling factor (185 aa).

The disordered stretch occupies residues 136 to 155 (NDDLKKLEKNGDITEDELRA).

It belongs to the RRF family.

It localises to the cytoplasm. In terms of biological role, responsible for the release of ribosomes from messenger RNA at the termination of protein biosynthesis. May increase the efficiency of translation by recycling ribosomes from one round of translation to another. The chain is Ribosome-recycling factor from Bacillus velezensis (strain DSM 23117 / BGSC 10A6 / LMG 26770 / FZB42) (Bacillus amyloliquefaciens subsp. plantarum).